A 134-amino-acid polypeptide reads, in one-letter code: Cytochrome b5 (134 aa).

Ala-2 is subject to N-acetylalanine. N6-acetyllysine occurs at positions 7, 10, and 19. The 77-residue stretch at 9-85 folds into the Cytochrome b5 heme-binding domain; that stretch reads VKYYTLEEIQ…SKTFIIGELH (77 aa). His-44 and His-68 together coordinate heme. The helical transmembrane segment at 109–131 threads the bilayer; that stretch reads WWTNWLIPAISALFVALIYHLYT.

This sequence belongs to the cytochrome b5 family.

It is found in the endoplasmic reticulum membrane. It localises to the microsome membrane. In terms of biological role, cytochrome b5 is a membrane-bound hemoprotein functioning as an electron carrier for several membrane-bound oxygenases. This is Cytochrome b5 (CYB5A) from Bos taurus (Bovine).